A 467-amino-acid polypeptide reads, in one-letter code: Cysteine--tRNA ligase (467 aa).

Cys28 is a Zn(2+) binding site. Positions 30–40 (PTVYNYIHVGN) match the 'HIGH' region motif. 3 residues coordinate Zn(2+): Cys212, His237, and Glu241. The 'KMSKS' region motif lies at 269–273 (KMSKS). Residue Lys272 coordinates ATP.

The protein belongs to the class-I aminoacyl-tRNA synthetase family. Monomer. Zn(2+) serves as cofactor.

The protein resides in the cytoplasm. It carries out the reaction tRNA(Cys) + L-cysteine + ATP = L-cysteinyl-tRNA(Cys) + AMP + diphosphate. This Oenococcus oeni (strain ATCC BAA-331 / PSU-1) protein is Cysteine--tRNA ligase.